A 252-amino-acid polypeptide reads, in one-letter code: tRNA (guanine-N(1)-)-methyltransferase (252 aa).

S-adenosyl-L-methionine-binding positions include glycine 113 and 133–138; that span reads IGDYVL.

The protein belongs to the RNA methyltransferase TrmD family. Homodimer.

It is found in the cytoplasm. It catalyses the reaction guanosine(37) in tRNA + S-adenosyl-L-methionine = N(1)-methylguanosine(37) in tRNA + S-adenosyl-L-homocysteine + H(+). Its function is as follows. Specifically methylates guanosine-37 in various tRNAs. In Nitrosococcus oceani (strain ATCC 19707 / BCRC 17464 / JCM 30415 / NCIMB 11848 / C-107), this protein is tRNA (guanine-N(1)-)-methyltransferase.